The sequence spans 285 residues: Bifunctional protein FolD (285 aa).

Residues 166 to 168, Ser191, and Ile232 contribute to the NADP(+) site; that span reads GAS.

It belongs to the tetrahydrofolate dehydrogenase/cyclohydrolase family. As to quaternary structure, homodimer.

It catalyses the reaction (6R)-5,10-methylene-5,6,7,8-tetrahydrofolate + NADP(+) = (6R)-5,10-methenyltetrahydrofolate + NADPH. The enzyme catalyses (6R)-5,10-methenyltetrahydrofolate + H2O = (6R)-10-formyltetrahydrofolate + H(+). It functions in the pathway one-carbon metabolism; tetrahydrofolate interconversion. Catalyzes the oxidation of 5,10-methylenetetrahydrofolate to 5,10-methenyltetrahydrofolate and then the hydrolysis of 5,10-methenyltetrahydrofolate to 10-formyltetrahydrofolate. The polypeptide is Bifunctional protein FolD (Edwardsiella ictaluri (strain 93-146)).